The chain runs to 440 residues: MSPDKPFRIMGDVGELHILPPKYAYEVRNNEKLSFTMAAFKWFYAHLPGFEGFREGTNESHIMKLVARHQLTHQLTLVTGAVSEECALVLKDVYTDSPEWHDITAKDANMKLMARITSRVFLGKEMCRNPQWLRITSTYAVIAFRAVEELRLWPSWLRPVVQWFMPHCTQSRALVQEARDLINPLLERRREEKAEAERTGEKVTYNDAVEWLDDLAREKGVGYDPACAQLSLSVAALHSTTDFFTQVMFDIAQNPELIEPLREEIIAVLGKQGWSKNSLYNLKLMDSVLKESQRLKPIAIASMRRFTTHNVKLSDGVILPKNKLTLVSAHQHWDPEYYKDPLKFDGYRFFNMRREPGKESKAQLVSATPDHMGFGYGLHACPGRFFASEEIKIALSHILLKYDFKPVEGSSMEPRKYGLNMNANPTAKLSVRRRKEEIAI.

Position 381 (cysteine 381) interacts with heme.

Belongs to the cytochrome P450 family. Requires heme as cofactor.

Its pathway is plant hormone biosynthesis; gibberellin biosynthesis. Functionally, GA14 synthase; part of the gene cluster that mediates the biosynthesis of gibberellins (GAs), diterpenoids that may provide a selective advantage during infection of the preferred host plant, rice. Gibberellins (GAs) are diterpenoids and are synthesized via the mevalonate pathway. Biosynthesis of the major metabolite GA3 (gibberellic acid) from geranylgeranyl diphosphate (GGPP) requires 13 steps. The GGPP produced by the geranylgeranyl diphosphate synthase GGS2 is converted to ent-kaurene via ent-copalyldiphosphate in a two-step cyclization reaction performed by the bifunctional ent-copalyl diphosphate synthase/ent-kaurene synthase enzyme (CPS/KS). Ent-Kaurene is metabolized to GAs by a series of oxidation reactions catalyzed by cytochrome P450 monooxygenases. Cytochrome P450 monooxygenase P450-4 is an ent-kaurene oxidase that catalyzes the three oxidation steps between ent-kaurene and ent-kaurenoic acid. The highly multifunctional cytochrome P450 monooxygenase P450-1 then catalyzes four steps involving oxidation at two carbon atoms, in the main pathway from ent-kaurenoic acid to GA14 via GA12-aldehyde as well as producing kaurenolides and fujenoic acids as by-products. The cytochrome P450 monooxygenase P450-2 then converts GA14 to GA4 by removal of C-20. GA4 is further converted to GA7 by the GA4 desaturase DES via 1,2-desaturation before cytochrome P450 monooxygenase P450-3, a 13-hydroxylase, hydroxylates GA7 to GA3, the final product of the GA-biosynthetic pathway. This is Cytochrome P450 monooygenase 1 from Gibberella fujikuroi (strain CBS 195.34 / IMI 58289 / NRRL A-6831) (Bakanae and foot rot disease fungus).